We begin with the raw amino-acid sequence, 453 residues long: Chromosomal replication initiator protein DnaA (453 aa).

Residues 1–75 (MSENMEELWS…SLKKISGKQL (75 aa)) are domain I, interacts with DnaA modulators. A domain II region spans residues 75–114 (LKIKFLLPGEKIKMEEQNNENEEKPESTSKKSSQGSEHTT). A compositionally biased stretch (basic and acidic residues) spans 87 to 103 (KMEEQNNENEEKPESTS). Positions 87-112 (KMEEQNNENEEKPESTSKKSSQGSEH) are disordered. The segment at 115-331 (WLNPKYTFDT…GGLIRVIAYS (217 aa)) is domain III, AAA+ region. Positions 159, 161, 162, and 163 each coordinate ATP. Positions 332 to 453 (SMANKKITKE…DEIKNLLHGD (122 aa)) are domain IV, binds dsDNA.

Belongs to the DnaA family. In terms of assembly, oligomerizes as a right-handed, spiral filament on DNA at oriC.

The protein localises to the cytoplasm. Its function is as follows. Plays an essential role in the initiation and regulation of chromosomal replication. ATP-DnaA binds to the origin of replication (oriC) to initiate formation of the DNA replication initiation complex once per cell cycle. Binds the DnaA box (a 9 base pair repeat at the origin) and separates the double-stranded (ds)DNA. Forms a right-handed helical filament on oriC DNA; dsDNA binds to the exterior of the filament while single-stranded (ss)DNA is stabiized in the filament's interior. The ATP-DnaA-oriC complex binds and stabilizes one strand of the AT-rich DNA unwinding element (DUE), permitting loading of DNA polymerase. After initiation quickly degrades to an ADP-DnaA complex that is not apt for DNA replication. Binds acidic phospholipids. In Natranaerobius thermophilus (strain ATCC BAA-1301 / DSM 18059 / JW/NM-WN-LF), this protein is Chromosomal replication initiator protein DnaA.